We begin with the raw amino-acid sequence, 207 residues long: Superoxide dismutase [Mn] (207 aa).

His-28, His-76, Asp-160, and His-164 together coordinate Mn(2+).

It belongs to the iron/manganese superoxide dismutase family. Mn(2+) serves as cofactor.

It localises to the secreted. It catalyses the reaction 2 superoxide + 2 H(+) = H2O2 + O2. Functionally, destroys superoxide anion radicals which are normally produced within the cells and which are toxic to biological systems. The polypeptide is Superoxide dismutase [Mn] (sodA) (Mycolicibacterium paratuberculosis (strain ATCC BAA-968 / K-10) (Mycobacterium paratuberculosis)).